We begin with the raw amino-acid sequence, 430 residues long: Gamma-glutamyl phosphate reductase (430 aa).

This sequence belongs to the gamma-glutamyl phosphate reductase family.

The protein resides in the cytoplasm. It catalyses the reaction L-glutamate 5-semialdehyde + phosphate + NADP(+) = L-glutamyl 5-phosphate + NADPH + H(+). The protein operates within amino-acid biosynthesis; L-proline biosynthesis; L-glutamate 5-semialdehyde from L-glutamate: step 2/2. In terms of biological role, catalyzes the NADPH-dependent reduction of L-glutamate 5-phosphate into L-glutamate 5-semialdehyde and phosphate. The product spontaneously undergoes cyclization to form 1-pyrroline-5-carboxylate. The polypeptide is Gamma-glutamyl phosphate reductase (Polaromonas naphthalenivorans (strain CJ2)).